The following is a 700-amino-acid chain: UvrABC system protein B (700 aa).

The Helicase ATP-binding domain maps to 26–183 (SGLHRGDRIQ…RALVGIQYLR (158 aa)). 39 to 46 (GVTGSGKT) is an ATP binding site. Residues 92-115 (YYDYYQPEAYVPSSDTYIEKDASI) carry the Beta-hairpin motif. Residues 430–596 (QVDDLLHEIR…GVTKSVDEVR (167 aa)) enclose the Helicase C-terminal domain. The segment at 608–627 (REGEAPAPRRLASESAPRSR) is disordered. One can recognise a UVR domain in the interval 631–666 (ETLVGELEIAMREAAVALDFEAAARLRDQLFEVRTA). Residues 667-700 (LGQAPSEARGNAQAPKRPPGSAPQRRAGGGRRGR) form a disordered region.

It belongs to the UvrB family. In terms of assembly, forms a heterotetramer with UvrA during the search for lesions. Interacts with UvrC in an incision complex.

It is found in the cytoplasm. The UvrABC repair system catalyzes the recognition and processing of DNA lesions. A damage recognition complex composed of 2 UvrA and 2 UvrB subunits scans DNA for abnormalities. Upon binding of the UvrA(2)B(2) complex to a putative damaged site, the DNA wraps around one UvrB monomer. DNA wrap is dependent on ATP binding by UvrB and probably causes local melting of the DNA helix, facilitating insertion of UvrB beta-hairpin between the DNA strands. Then UvrB probes one DNA strand for the presence of a lesion. If a lesion is found the UvrA subunits dissociate and the UvrB-DNA preincision complex is formed. This complex is subsequently bound by UvrC and the second UvrB is released. If no lesion is found, the DNA wraps around the other UvrB subunit that will check the other stand for damage. The protein is UvrABC system protein B of Gemmatimonas aurantiaca (strain DSM 14586 / JCM 11422 / NBRC 100505 / T-27).